The sequence spans 105 residues: BLOC-1-related complex subunit 7 (105 aa).

It belongs to the BORCS7 family. In terms of assembly, component of the BLOC-one-related complex (BORC) which is composed of BLOC1S1, BLOC1S2, BORCS5, BORCS6, BORCS7, BORCS8, KXD1 and SNAPIN.

It is found in the lysosome membrane. As part of the BORC complex may play a role in lysosomes movement and localization at the cell periphery. Associated with the cytosolic face of lysosomes, the BORC complex may recruit ARL8B and couple lysosomes to microtubule plus-end-directed kinesin motor. In Bos taurus (Bovine), this protein is BLOC-1-related complex subunit 7.